Consider the following 217-residue polypeptide: Ribosomal large subunit pseudouridine synthase E (217 aa).

The segment covering 19-28 has biased composition (polar residues); sequence HQVKRFSSQR. Residues 19-38 are disordered; that stretch reads HQVKRFSSQRSTRRKPENQP. Asp-79 acts as the Nucleophile in catalysis.

This sequence belongs to the pseudouridine synthase RsuA family.

It catalyses the reaction uridine(2457) in 23S rRNA = pseudouridine(2457) in 23S rRNA. In terms of biological role, responsible for synthesis of pseudouridine from uracil-2457 in 23S ribosomal RNA. In Escherichia coli O157:H7, this protein is Ribosomal large subunit pseudouridine synthase E (rluE).